The chain runs to 403 residues: Argininosuccinate synthase (403 aa).

ATP contacts are provided by residues Ala-10 to Ser-18 and Ala-38. Tyr-89 is an L-citrulline binding site. Residue Gly-119 coordinates ATP. Residues Thr-121, Asn-125, and Asp-126 each coordinate L-aspartate. Asn-125 serves as a coordination point for L-citrulline. The L-citrulline site is built by Arg-129, Ser-177, Ser-186, Glu-262, and Tyr-274.

It belongs to the argininosuccinate synthase family. Type 1 subfamily. As to quaternary structure, homotetramer.

The protein localises to the cytoplasm. It catalyses the reaction L-citrulline + L-aspartate + ATP = 2-(N(omega)-L-arginino)succinate + AMP + diphosphate + H(+). The protein operates within amino-acid biosynthesis; L-arginine biosynthesis; L-arginine from L-ornithine and carbamoyl phosphate: step 2/3. This Synechococcus sp. (strain CC9902) protein is Argininosuccinate synthase.